Reading from the N-terminus, the 524-residue chain is Cytochrome P450 4F3 (524 aa).

Residues 19 to 39 (WLLLLLAGASCLLAYILTPIY) traverse the membrane as a helical segment. Cys468 is a binding site for heme.

The protein belongs to the cytochrome P450 family. It depends on heme as a cofactor. As to expression, highest level in polymorphonuclear leukocytes and dendritic cells. Detectable in lymph nodes, spleen, bone marrow and peripheral blood. Highly expressed in ovary. Very low level in liver, kidney, and smooth muscle. Expressed in neutrophils (at protein level).

The protein localises to the endoplasmic reticulum membrane. It localises to the microsome membrane. The catalysed reaction is leukotriene B4 + reduced [NADPH--hemoprotein reductase] + O2 = 18-hydroxy-leukotriene B4 + oxidized [NADPH--hemoprotein reductase] + H2O + H(+). It carries out the reaction leukotriene B4 + reduced [NADPH--hemoprotein reductase] + O2 = 19-hydroxy-leukotriene B4 + oxidized [NADPH--hemoprotein reductase] + H2O + H(+). The protein operates within lipid metabolism; leukotriene B4 degradation. Its function is as follows. A cytochrome P450 monooxygenase involved in the metabolism of the pro-inflammatory lipid mediator leukotriene B4 (LTB4). Hydroxylates at the omega-1 and omega-2 positions LTB4. This oxidation step leads to LTB4 inactivation, which is postulated to be a crucial part of the resolution of inflammation. Mechanistically, uses molecular oxygen inserting one oxygen atom into a substrate, and reducing the second into a water molecule, with two electrons provided by NADPH via cytochrome P450 reductase (CPR; NADPH-ferrihemoprotein reductase). This Mus musculus (Mouse) protein is Cytochrome P450 4F3.